Consider the following 117-residue polypeptide: Peptidyl-tRNA hydrolase (117 aa).

The protein belongs to the PTH2 family.

Its subcellular location is the cytoplasm. It catalyses the reaction an N-acyl-L-alpha-aminoacyl-tRNA + H2O = an N-acyl-L-amino acid + a tRNA + H(+). In terms of biological role, the natural substrate for this enzyme may be peptidyl-tRNAs which drop off the ribosome during protein synthesis. This Thermoplasma acidophilum (strain ATCC 25905 / DSM 1728 / JCM 9062 / NBRC 15155 / AMRC-C165) protein is Peptidyl-tRNA hydrolase.